Consider the following 316-residue polypeptide: N-acetylmuramic acid 6-phosphate etherase (316 aa).

The segment at 1-24 is disordered; that stretch reads MTRFQSDAAVSADRGHLMTEQPNP. Residues 66–229 form the SIS domain; it reads IASRLKDGGR…STAVMVRLGK (164 aa). E94 acts as the Proton donor in catalysis. E125 is an active-site residue.

The protein belongs to the GCKR-like family. MurNAc-6-P etherase subfamily. As to quaternary structure, homodimer.

It catalyses the reaction N-acetyl-D-muramate 6-phosphate + H2O = N-acetyl-D-glucosamine 6-phosphate + (R)-lactate. The protein operates within amino-sugar metabolism; N-acetylmuramate degradation. In terms of biological role, specifically catalyzes the cleavage of the D-lactyl ether substituent of MurNAc 6-phosphate, producing GlcNAc 6-phosphate and D-lactate. In Parasynechococcus marenigrum (strain WH8102), this protein is N-acetylmuramic acid 6-phosphate etherase.